The following is a 98-amino-acid chain: Lipolysis-activating peptide 1-alpha chain (98 aa).

The signal sequence occupies residues 1–22 (MMKLVLFGIIVILFSMIGSIHG). In terms of domain architecture, LCN-type CS-alpha/beta spans 26–89 (PGNYPLNTYG…IWDAVKRHCK (64 aa)). Intrachain disulfides connect C40–C63, C49–C68, and C53–C70. At K96 the chain carries Lysine amide.

It belongs to the long (3 C-C) scorpion toxin superfamily. Monomer (edited version) and heterodimer (non-edited version) of this alpha chain and a beta chain (AC B8XGZ8). As to expression, expressed by the venom gland.

The protein resides in the secreted. Its function is as follows. The heterodimer non-edited LVP1 induces lipolysis in rat adipocytes. Induction of lipolysis by LVP1 appears to be mediated through the beta-2 adrenergic receptor pathway (ADRB2). In terms of biological role, the edited BmKBTx-like, similar to beta-toxins, may modulate voltage-gated sodium channels (Nav) and may block voltage-gated potassium channels (Kv). In Buthus israelis (Israeli scorpion), this protein is Lipolysis-activating peptide 1-alpha chain.